Here is a 284-residue protein sequence, read N- to C-terminus: Flavin-dependent thymidylate synthase (284 aa).

The ThyX domain occupies 27–237 (GFIRVVDYMG…PLAYNAFVEY (211 aa)). Residues Thr-73, 96–98 (RHR), and Glu-104 contribute to the FAD site. Residues 93-96 (QWIR) and 104-108 (EYSAR) contribute to the dUMP site. A ThyX motif motif is present at residues 96–106 (RHRTANVNEYS). Residues 122-142 (EQVAKQSDNNKQGSGEAFDPD) are disordered. The span at 125–134 (AKQSDNNKQG) shows a compositional bias: polar residues. Arg-176 lines the dUMP pocket. Residues 192-194 (DLH) and His-198 contribute to the FAD site. Arg-203 is a binding site for dUMP. The active-site Involved in ionization of N3 of dUMP, leading to its activation is the Arg-203.

Belongs to the thymidylate synthase ThyX family. As to quaternary structure, homotetramer. It depends on FAD as a cofactor.

It catalyses the reaction dUMP + (6R)-5,10-methylene-5,6,7,8-tetrahydrofolate + NADPH + H(+) = dTMP + (6S)-5,6,7,8-tetrahydrofolate + NADP(+). The protein operates within pyrimidine metabolism; dTTP biosynthesis. Its function is as follows. Catalyzes the reductive methylation of 2'-deoxyuridine-5'-monophosphate (dUMP) to 2'-deoxythymidine-5'-monophosphate (dTMP) while utilizing 5,10-methylenetetrahydrofolate (mTHF) as the methyl donor, and NADPH and FADH(2) as the reductant. This is Flavin-dependent thymidylate synthase from Wolbachia pipientis wMel.